Here is a 242-residue protein sequence, read N- to C-terminus: MENLLKIYDIKEEELSELKALTPARICVGRAGTRLKTNTFLKFRADHAVAMDAVWSSVDEKLIDTLNFLKVQTLAKDKEEYITRPDLGRKFSEETLDYIKNNCINEPDVQIIAGDGLSATAINANLRKIYFVIVEKLKSRGYKVGTPIFVKYARVATMDKISEELNAKVTIILIGERPGLATGESMSSYMAYESSTKKPESQRTVVSNIHNKGIPSVDAGKEIVRIIDIMMKEKKSGVELRI.

Residues valine 155 and glutamate 176 each coordinate adenosylcob(III)alamin.

This sequence belongs to the EutC family. The basic unit is a heterodimer which dimerizes to form tetramers. The heterotetramers trimerize; 6 large subunits form a core ring with 6 small subunits projecting outwards. Requires adenosylcob(III)alamin as cofactor.

Its subcellular location is the bacterial microcompartment. The enzyme catalyses ethanolamine = acetaldehyde + NH4(+). Its pathway is amine and polyamine degradation; ethanolamine degradation. Functionally, catalyzes the deamination of various vicinal amino-alcohols to oxo compounds. Allows this organism to utilize ethanolamine as the sole source of nitrogen and carbon in the presence of external vitamin B12. The chain is Ethanolamine ammonia-lyase small subunit from Clostridium acetobutylicum (strain ATCC 824 / DSM 792 / JCM 1419 / IAM 19013 / LMG 5710 / NBRC 13948 / NRRL B-527 / VKM B-1787 / 2291 / W).